The chain runs to 201 residues: Adenylyl-sulfate kinase (201 aa).

35-42 (GLSGSGKS) is a binding site for ATP. S109 acts as the Phosphoserine intermediate in catalysis.

This sequence belongs to the APS kinase family.

It catalyses the reaction adenosine 5'-phosphosulfate + ATP = 3'-phosphoadenylyl sulfate + ADP + H(+). It functions in the pathway sulfur metabolism; hydrogen sulfide biosynthesis; sulfite from sulfate: step 2/3. Functionally, catalyzes the synthesis of activated sulfate. In Salmonella arizonae (strain ATCC BAA-731 / CDC346-86 / RSK2980), this protein is Adenylyl-sulfate kinase.